A 176-amino-acid chain; its full sequence is N5-carboxyaminoimidazole ribonucleotide mutase (176 aa).

3 residues coordinate substrate: S14, D17, and R44.

The protein belongs to the AIR carboxylase family. Class I subfamily.

It carries out the reaction 5-carboxyamino-1-(5-phospho-D-ribosyl)imidazole + H(+) = 5-amino-1-(5-phospho-D-ribosyl)imidazole-4-carboxylate. Its pathway is purine metabolism; IMP biosynthesis via de novo pathway; 5-amino-1-(5-phospho-D-ribosyl)imidazole-4-carboxylate from 5-amino-1-(5-phospho-D-ribosyl)imidazole (N5-CAIR route): step 2/2. Catalyzes the conversion of N5-carboxyaminoimidazole ribonucleotide (N5-CAIR) to 4-carboxy-5-aminoimidazole ribonucleotide (CAIR). This chain is N5-carboxyaminoimidazole ribonucleotide mutase, found in Synechocystis sp. (strain ATCC 27184 / PCC 6803 / Kazusa).